The sequence spans 467 residues: MEKISRTKIVDLMKREDFGAMVNVKGWVRTRRGSKQVNFIALNDGSTINNVQVVVDLANFDEEMLKQITTGACLSVNGVLTESVGAGQKAEVQAREIEVLGTCDNTYPLQKKGHSMEFLREIAHLRPRTNTFGAVFRIRHNMAIAIHKFFHEKGFFYFHTPIITASDCEGAGQMFQVTTMNLYDLKKDENGSIVYDDDFFGKQASLTVSGQLEGELAATALGAIYTFGPTFRAENSNTPRHLAEFWMIEPEVAFNEIQENMDLAEEFIKYCVRWALDNCADDVKFLNDMFDKGLIERLEGVLKEDFVRLPYTEGIKILEEAVAKGHKFEFPVYWGVDLASEHERYLVEDHFKRPVILTDYPKEIKAFYMKQNEDGKTVRAMDVLFPKIGEIIGGSERESDYNKLMMRIEEMHIPMKDMWWYLDTRKFGTCPHSGFGLGFERLLLFVTGMSNIRDVIPFPRTPRNADF.

The protein belongs to the class-II aminoacyl-tRNA synthetase family. As to quaternary structure, homodimer.

The protein resides in the cytoplasm. It catalyses the reaction tRNA(Asn) + L-asparagine + ATP = L-asparaginyl-tRNA(Asn) + AMP + diphosphate + H(+). This is Asparagine--tRNA ligase from Bacteroides fragilis (strain YCH46).